A 215-amino-acid chain; its full sequence is Meiotic chromosome segregation protein P8B7.28c (215 aa).

Positions 159-202 are disordered; it reads TINSEYADDVSDNTDEERTESKGQQESNSAEEYDDDDSDEDRME. 2 stretches are compositionally biased toward acidic residues: residues 164–176 and 187–201; these read YADD…DEER and SAEE…EDRM.

It localises to the nucleus. It is found in the nucleolus. Required for meiotic chromosome segregation. The protein is Meiotic chromosome segregation protein P8B7.28c of Schizosaccharomyces pombe (strain 972 / ATCC 24843) (Fission yeast).